Here is a 127-residue protein sequence, read N- to C-terminus: Thioredoxin (127 aa).

Residues 2-115 (SDGVKHINSA…LRAAAEKMGR (114 aa)) enclose the Thioredoxin domain. Active-site nucleophile residues include C33 and C36. Cysteines 33 and 36 form a disulfide.

Belongs to the thioredoxin family.

In terms of biological role, participates in various redox reactions through the reversible oxidation of its active center dithiol to a disulfide and catalyzes dithiol-disulfide exchange reactions. This is Thioredoxin (trx) from Neurospora crassa (strain ATCC 24698 / 74-OR23-1A / CBS 708.71 / DSM 1257 / FGSC 987).